The primary structure comprises 186 residues: uncharacterized protein (186 aa).

The first 18 residues, 1–18 (MNKFLFAAALIVSGLLVG), serve as a signal peptide directing secretion. The N-palmitoyl cysteine moiety is linked to residue C19. C19 carries the S-diacylglycerol cysteine lipid modification.

Its subcellular location is the cell membrane. This is an uncharacterized protein from Escherichia coli (strain K12).